We begin with the raw amino-acid sequence, 787 residues long: (-)-kolavenyl diphosphate synthase, chloroplastic (787 aa).

A chloroplast-targeting transit peptide spans 1–47; that stretch reads MSFATSLPRPTTTGAAGFGLPLATCISLSVSHSFSPKFGICNNTSLR. A substrate-binding site is contributed by Lys-237. Positions 368 and 370 each coordinate Mg(2+). The DXDD motif motif lies at 368–371; sequence DSDD. Lys-454 provides a ligand contact to substrate.

Belongs to the terpene synthase family. Tpsc subfamily. Requires Mg(2+) as cofactor. In terms of tissue distribution, expressed in peltate glandular trichomes of leaves. Highly expressed in the first leaf pair.

It is found in the plastid. The protein resides in the chloroplast. The enzyme catalyses (2E,6E,10E)-geranylgeranyl diphosphate = (-)-kolavenyl diphosphate. With respect to regulation, inhibited by high concentrations of magnesium. Its function is as follows. Involved in the biosynthesis of clerodane diterpenoids natural products, including salvinorin A with potent agonistic activity on brain kappa-opioid receptors, thus conferring hallucinogenic properties. Diterpene synthase that catalyzes the formation of (-)-kolavenyl diphosphate from geranylgeranyl diphosphate (GGPP) as the first reaction in salvinorin A biosynthesis. The protein is (-)-kolavenyl diphosphate synthase, chloroplastic of Salvia divinorum (Maria pastora).